The following is a 2871-amino-acid chain: Desmoplakin (2871 aa).

The interaction with PKP1, JUP, PKP2 stretch occupies residues M1–E584. The globular 1 stretch occupies residues M1–K1056. Phosphoserine is present on residues S22 and S53. Y56 bears the Phosphotyrosine mark. Residue T61 is modified to Phosphothreonine. 3 positions are modified to phosphoserine: S165, S166, and S176. 2 Spectrin repeats span residues S178 to Q271 and L272 to N375. A Spectrin 3a repeat occupies A376–V446. An SH3 domain is found at N458 to P515. One copy of the Spectrin 3b repeat lies at N516–K545. 3 Spectrin repeats span residues S546–P627, V654–T769, and V770–K883. Positions S1018–R1945 form a coiled coil. Residues F1057–R1945 are central fibrous rod domain. 3 positions are modified to phosphoserine: S1658, S1708, and S2024. Residues P1946–H2871 are globular 2. The 4.5 X 38 AA tandem repeats (Domain A) stretch occupies residues T1960 to M2208. Plectin repeat units lie at residues Q2009–T2045, V2046–R2083, Q2084–G2121, M2122–Y2159, N2163–G2197, L2198–V2233, K2251–A2288, L2289–K2326, E2327–G2364, I2365–S2402, S2406–G2440, S2456–F2493, T2507–F2544, S2610–G2647, Q2648–A2685, Q2724–A2761, and Q2762–G2799. S2207, S2209, and S2225 each carry phosphoserine. A 4.5 X 38 AA tandem repeats (Domain B) region spans residues D2244–L2446. The interval F2609–A2822 is 4.5 X 38 AA tandem repeats (Domain C). Phosphoserine occurs at positions 2810 and 2815. Residues S2810–P2823 show a composition bias toward polar residues. Positions S2810–H2871 are disordered. Residue Y2817 is modified to Phosphotyrosine. Phosphoserine occurs at positions 2820, 2821, and 2825. The tract at residues G2824–R2847 is 6 X 4 AA tandem repeats of G-S-R-[SR]. Residues G2824–R2847 show a composition bias toward low complexity. Residues R2826 and R2847 each carry the omega-N-methylarginine modification. S2849 is modified (phosphoserine). At T2853 the chain carries Phosphothreonine. The segment covering S2856–H2871 has biased composition (low complexity). At S2868 the chain carries Phosphoserine.

This sequence belongs to the plakin or cytolinker family. In terms of assembly, homodimer. Interacts with COL17A1 (via cytoplasmic region). Interacts with DSC2. Interacts with PKP2. Interacts with PKP1. Interacts weakly with TMEM65. Phosphorylation at Ser-2849 increases association with intermediate filament cytokeratin, potentially facilitating interaction between desmosome junctions and intermediate filament architecture. As to expression, expressed in oral mucosa (at protein level). Expressed in arrector pili muscle (at protein level). Expressed in the heart in the heart (at protein level). Apparently an obligate constituent of all desmosomes. In terms of tissue distribution, resides predominantly in tissues and cells of stratified origin.

It is found in the cell junction. The protein resides in the desmosome. It localises to the cell membrane. The protein localises to the cytoplasm. Its function is as follows. Major high molecular weight protein of desmosomes. Regulates profibrotic gene expression in cardiomyocytes via activation of the MAPK14/p38 MAPK signaling cascade and increase in TGFB1 protein abundance. The polypeptide is Desmoplakin (DSP) (Homo sapiens (Human)).